The primary structure comprises 340 residues: Extracellular matrix protein-binding protein emp (340 aa).

Positions 1-26 (MKKKLLVLTMSTLFATQIMNSNHAKA) are cleaved as a signal peptide.

The protein localises to the cell surface. In terms of biological role, adhesin that binds to the host cell extracellular matrix proteins fibronectin, fibrinogen, collagen, and vitronectin. This Staphylococcus aureus (strain MSSA476) protein is Extracellular matrix protein-binding protein emp (emp).